The primary structure comprises 232 residues: Ribonuclease HII (232 aa).

The RNase H type-2 domain maps to 26–218 (RILCGVDEAG…VRRALEGMSA (193 aa)). A divalent metal cation-binding residues include D32, E33, and D127.

Belongs to the RNase HII family. Requires Mn(2+) as cofactor. It depends on Mg(2+) as a cofactor.

It is found in the cytoplasm. It carries out the reaction Endonucleolytic cleavage to 5'-phosphomonoester.. Its function is as follows. Endonuclease that specifically degrades the RNA of RNA-DNA hybrids. The sequence is that of Ribonuclease HII from Ralstonia pickettii (strain 12J).